Here is a 783-residue protein sequence, read N- to C-terminus: DNA polymerase II (783 aa).

This sequence belongs to the DNA polymerase type-B family.

It carries out the reaction DNA(n) + a 2'-deoxyribonucleoside 5'-triphosphate = DNA(n+1) + diphosphate. DNA polymerase II activity is regulated by the lexA gene during the SOS response. Its function is as follows. Thought to be involved in DNA repair and/or mutagenesis. Its processivity is enhanced by the beta sliding clamp (dnaN) and clamp loader. This Escherichia coli (strain K12) protein is DNA polymerase II (polB).